The primary structure comprises 174 residues: Crossover junction endodeoxyribonuclease RuvC (174 aa).

Residues D16, E76, and D148 contribute to the active site. 3 residues coordinate Mg(2+): D16, E76, and D148.

Belongs to the RuvC family. In terms of assembly, homodimer which binds Holliday junction (HJ) DNA. The HJ becomes 2-fold symmetrical on binding to RuvC with unstacked arms; it has a different conformation from HJ DNA in complex with RuvA. In the full resolvosome a probable DNA-RuvA(4)-RuvB(12)-RuvC(2) complex forms which resolves the HJ. Requires Mg(2+) as cofactor.

It is found in the cytoplasm. The catalysed reaction is Endonucleolytic cleavage at a junction such as a reciprocal single-stranded crossover between two homologous DNA duplexes (Holliday junction).. In terms of biological role, the RuvA-RuvB-RuvC complex processes Holliday junction (HJ) DNA during genetic recombination and DNA repair. Endonuclease that resolves HJ intermediates. Cleaves cruciform DNA by making single-stranded nicks across the HJ at symmetrical positions within the homologous arms, yielding a 5'-phosphate and a 3'-hydroxyl group; requires a central core of homology in the junction. The consensus cleavage sequence is 5'-(A/T)TT(C/G)-3'. Cleavage occurs on the 3'-side of the TT dinucleotide at the point of strand exchange. HJ branch migration catalyzed by RuvA-RuvB allows RuvC to scan DNA until it finds its consensus sequence, where it cleaves and resolves the cruciform DNA. This is Crossover junction endodeoxyribonuclease RuvC from Rhodopseudomonas palustris (strain BisA53).